The sequence spans 448 residues: Phosphoglucosamine mutase (448 aa).

Ser99 (phosphoserine intermediate) is an active-site residue. Positions 99, 239, 241, and 243 each coordinate Mg(2+). Ser99 is modified (phosphoserine).

This sequence belongs to the phosphohexose mutase family. The cofactor is Mg(2+). Post-translationally, activated by phosphorylation.

The catalysed reaction is alpha-D-glucosamine 1-phosphate = D-glucosamine 6-phosphate. Catalyzes the conversion of glucosamine-6-phosphate to glucosamine-1-phosphate. The sequence is that of Phosphoglucosamine mutase from Lachnoclostridium phytofermentans (strain ATCC 700394 / DSM 18823 / ISDg) (Clostridium phytofermentans).